The primary structure comprises 431 residues: 5-methylthioadenosine/S-adenosylhomocysteine deaminase (431 aa).

Residues His66 and His68 each coordinate Zn(2+). The substrate site is built by Glu95, Arg147, and His185. Position 212 (His212) interacts with Zn(2+). Residues Glu215 and Asp300 each coordinate substrate. A Zn(2+)-binding site is contributed by Asp300.

The protein belongs to the metallo-dependent hydrolases superfamily. MTA/SAH deaminase family. It depends on Zn(2+) as a cofactor.

It carries out the reaction S-adenosyl-L-homocysteine + H2O + H(+) = S-inosyl-L-homocysteine + NH4(+). The enzyme catalyses S-methyl-5'-thioadenosine + H2O + H(+) = S-methyl-5'-thioinosine + NH4(+). Functionally, catalyzes the deamination of 5-methylthioadenosine and S-adenosyl-L-homocysteine into 5-methylthioinosine and S-inosyl-L-homocysteine, respectively. Is also able to deaminate adenosine. This is 5-methylthioadenosine/S-adenosylhomocysteine deaminase from Desulfitobacterium hafniense (strain DSM 10664 / DCB-2).